Consider the following 550-residue polypeptide: MKPLKTLPAWKALEQHFKSMRNFDMRAAFREDAARFETLSLRCGNLLLDYSKNRVTQETMRHLAQLARESELEEMRNAMCTGERINFTEKRAVLHVALRAPVRPALMVEGVDVEREIAKVLHRMQRFVESVHNGSWRGHTGKPIRNVVNIGIGGSDLGPAMVCHALDHYAVENVRVHFVSNLDPSHLAGTLAQLDPETTLFIVASKTFTTLETLANANSAKAWLLAALRAPEAVARHFVALSTNAQAVEAFGIDPENMFIFWDWVGGRYSLWSAIGLSIALQIGWGNFQALLAGAHAMDVHFKEAPLEANMPVILGMLGIWYANFWGTDTYGVFPYDQRLRLLVPFLQQLDMESNGKNVNRANKLVNYNTGPIVWGAPGTNGQHAFFELVHQGTRLIPTDFLVAAVNLTPLADQHEWLLANCLAQTEALLKGKSRAVIEAELIAQGMTRDDARALAPHKVFPGNRPSNTLLYQKLDPHTLGMLIALYEHKVFVQGVIWQINSFDQWGVELGKQLAPPIRAALSSVRVIGEHDGSTQGLIADIRRRRGLST.

Glutamate 353 functions as the Proton donor in the catalytic mechanism. Active-site residues include histidine 384 and lysine 512.

Belongs to the GPI family.

Its subcellular location is the cytoplasm. The enzyme catalyses alpha-D-glucose 6-phosphate = beta-D-fructose 6-phosphate. The protein operates within carbohydrate biosynthesis; gluconeogenesis. It participates in carbohydrate degradation; glycolysis; D-glyceraldehyde 3-phosphate and glycerone phosphate from D-glucose: step 2/4. Its function is as follows. Catalyzes the reversible isomerization of glucose-6-phosphate to fructose-6-phosphate. This chain is Glucose-6-phosphate isomerase 1, found in Thiobacillus denitrificans (strain ATCC 25259 / T1).